Reading from the N-terminus, the 150-residue chain is D-aminoacyl-tRNA deacylase (150 aa).

A Gly-cisPro motif, important for rejection of L-amino acids motif is present at residues 137–138 (GP).

It belongs to the DTD family. In terms of assembly, homodimer.

It localises to the cytoplasm. It catalyses the reaction glycyl-tRNA(Ala) + H2O = tRNA(Ala) + glycine + H(+). The catalysed reaction is a D-aminoacyl-tRNA + H2O = a tRNA + a D-alpha-amino acid + H(+). Its function is as follows. An aminoacyl-tRNA editing enzyme that deacylates mischarged D-aminoacyl-tRNAs. Also deacylates mischarged glycyl-tRNA(Ala), protecting cells against glycine mischarging by AlaRS. Acts via tRNA-based rather than protein-based catalysis; rejects L-amino acids rather than detecting D-amino acids in the active site. By recycling D-aminoacyl-tRNA to D-amino acids and free tRNA molecules, this enzyme counteracts the toxicity associated with the formation of D-aminoacyl-tRNA entities in vivo and helps enforce protein L-homochirality. The sequence is that of D-aminoacyl-tRNA deacylase from Alkalilimnicola ehrlichii (strain ATCC BAA-1101 / DSM 17681 / MLHE-1).